The chain runs to 275 residues: 18S rRNA (guanine(1575)-N(7))-methyltransferase (275 aa).

The segment at 256 to 275 is disordered; sequence RGRKVAKDSKFTGRKRRHRF. The Nuclear localization signal signature appears at 257–264; the sequence is GRKVAKDS.

This sequence belongs to the class I-like SAM-binding methyltransferase superfamily. BUD23/WBSCR22 family. Interacts with TRM112. Interacts with ECM16.

It is found in the cytoplasm. Its subcellular location is the nucleus. It catalyses the reaction guanosine(1575) in yeast 18S rRNA + S-adenosyl-L-methionine = N(7)-methylguanosine(1575) in yeast 18S rRNA + S-adenosyl-L-homocysteine. Functionally, S-adenosyl-L-methionine-dependent methyltransferase that specifically methylates the N(7) position of guanine 1575 (m7G1575) in 18S rRNA. Requires the methyltransferase adapter protein TRM112 for full rRNA methyltransferase activity. Important for biogenesis end export of the 40S ribosomal subunit independent on its methyltransferase activity. Required for efficient cleavage of the primary 35S precursor rRNA at site A2. Involved in positioning the proximal bud pole signal. The protein is 18S rRNA (guanine(1575)-N(7))-methyltransferase (BUD23) of Saccharomyces cerevisiae (strain ATCC 204508 / S288c) (Baker's yeast).